Consider the following 310-residue polypeptide: Putative S-adenosyl-L-methionine-dependent methyltransferase Mb0151 (310 aa).

Residues Asp-132 and 161–162 contribute to the S-adenosyl-L-methionine site; that span reads DL.

This sequence belongs to the UPF0677 family.

Its function is as follows. Exhibits S-adenosyl-L-methionine-dependent methyltransferase activity. The chain is Putative S-adenosyl-L-methionine-dependent methyltransferase Mb0151 from Mycobacterium bovis (strain ATCC BAA-935 / AF2122/97).